The sequence spans 547 residues: MSPAGKGPAWRQPAILAAAGAAHALSFAPDPLPAWSLAPVQVIALAVAAHASLQAPSARRALARGWLFAMFSFSLGLYWLYVSMHDYGGLAAPLAAAGVLALSAFLALFPGLACAAARWLCPPHWDASPPARARRTLYTAATWAACWAALEWLRAVVLTGFPWLNIGYAHVDSPLAGWAPLLGVHGMALLAAFAAAALAGLWQSASGRIDSRQALAAGVALLLAGAGWLLGQFSWSRPEGKPLHLRLVQGNVEQSQKFDPALLETGLRRHLELASLPPRPGEPKPDLIILPETVLPVFQDQLPASVWDAWIEVARRADTRIAMGVPLHTQPDGATGHRYTNSVIGFDASTPVEQLRTGTTAMRYDKQHLVPWGEYVPPGFRWFVDMLDIPLGDFDRGAARQPSFDIAGQRIAFNICYEDLFGPELLPALQDGPDGRPGATIMANVSNLGWFGNTWALRQHLQIGRLRTMETARPMVAATNTGITAAIDARGRVAAALPAGRAGVLPVAVQGMTGLTPYARFGDKPALALIGLLLIAAAARGRRPRQP.

6 helical membrane-spanning segments follow: residues 31 to 51, 65 to 85, 89 to 109, 144 to 164, 181 to 201, and 215 to 235; these read PLPA…AAHA, GWLF…VSMH, GLAA…LALF, AACW…FPWL, LLGV…LAGL, and LAAG…QFSW. Residues 248–511 form the CN hydrolase domain; sequence VQGNVEQSQK…AGVLPVAVQG (264 aa). Residue glutamate 292 is the Proton acceptor of the active site. Lysine 366 is an active-site residue. Cysteine 416 functions as the Nucleophile in the catalytic mechanism.

It belongs to the CN hydrolase family. Apolipoprotein N-acyltransferase subfamily.

The protein resides in the cell inner membrane. The catalysed reaction is N-terminal S-1,2-diacyl-sn-glyceryl-L-cysteinyl-[lipoprotein] + a glycerophospholipid = N-acyl-S-1,2-diacyl-sn-glyceryl-L-cysteinyl-[lipoprotein] + a 2-acyl-sn-glycero-3-phospholipid + H(+). Its pathway is protein modification; lipoprotein biosynthesis (N-acyl transfer). Catalyzes the phospholipid dependent N-acylation of the N-terminal cysteine of apolipoprotein, the last step in lipoprotein maturation. This chain is Apolipoprotein N-acyltransferase, found in Bordetella bronchiseptica (strain ATCC BAA-588 / NCTC 13252 / RB50) (Alcaligenes bronchisepticus).